A 192-amino-acid chain; its full sequence is Imidazoleglycerol-phosphate dehydratase (192 aa).

Belongs to the imidazoleglycerol-phosphate dehydratase family.

The protein localises to the cytoplasm. The catalysed reaction is D-erythro-1-(imidazol-4-yl)glycerol 3-phosphate = 3-(imidazol-4-yl)-2-oxopropyl phosphate + H2O. It functions in the pathway amino-acid biosynthesis; L-histidine biosynthesis; L-histidine from 5-phospho-alpha-D-ribose 1-diphosphate: step 6/9. The sequence is that of Imidazoleglycerol-phosphate dehydratase from Staphylococcus aureus (strain MRSA252).